A 694-amino-acid chain; its full sequence is Katanin p80 WD40 repeat-containing subunit B1 (694 aa).

6 WD repeats span residues 18–58, 61–100, 103–142, 145–186, 188–226, and 229–269; these read AHSS…CIMS, GHTSAVGCIQFNSSEERVVAGSLSGSLRLWDLEAAKILRT, GHKASISSLDFHPMGEYLASGSVDSNIKLWDVRRKGCVFR, GHTQ…TEFT, HTSAVNVVQFHPNEYLLASGSADRTVKLWDLEKFNMIGS, and GETG…DVVH. Disordered stretches follow at residues 319–410 and 470–492; these read KPIP…PFPA and TTSASSPSRPVVNTTKPKPSTGI. Residues 327–349 show a composition bias toward polar residues; that stretch reads ALGTTLRRNYERPTTSCTGQEMK. Residues 350–378 are compositionally biased toward basic and acidic residues; the sequence is QSSEADRRSPEGERRSPSSEDEKEDKESS. Over residues 470 to 481 the composition is skewed to low complexity; the sequence is TTSASSPSRPVV. Residues 482–492 are compositionally biased toward polar residues; that stretch reads NTTKPKPSTGI.

The protein belongs to the WD repeat KATNB1 family. In terms of assembly, interacts with katna1. This interaction enhances the microtubule binding and severing activity of katna1 and also targets this activity to the centrosome.

The protein resides in the cytoplasm. The protein localises to the cytoskeleton. Its subcellular location is the microtubule organizing center. It localises to the centrosome. It is found in the spindle pole. The protein resides in the spindle. In terms of biological role, participates in a complex which severs microtubules in an ATP-dependent manner. May act to target the enzymatic subunit of this complex to sites of action such as the centrosome. Microtubule severing may promote rapid reorganization of cellular microtubule arrays and the release of microtubules from the centrosome following nucleation. This is Katanin p80 WD40 repeat-containing subunit B1 (katnb1) from Danio rerio (Zebrafish).